We begin with the raw amino-acid sequence, 262 residues long: Putative non-heme bromoperoxidase BpoC (262 aa).

Substrate-binding positions include arginine 21, 87 to 88 (SM), and arginine 120. Serine 87 is a catalytic residue. Catalysis depends on residues aspartate 211 and histidine 239. A substrate-binding site is contributed by histidine 239.

The protein belongs to the AB hydrolase superfamily. Homodimer.

This Mycobacterium tuberculosis (strain CDC 1551 / Oshkosh) protein is Putative non-heme bromoperoxidase BpoC (bpoC).